The primary structure comprises 510 residues: Pre-glycoprotein polyprotein GP complex (510 aa).

Residue glycine 2 is the site of N-myristoyl glycine; by host attachment. Topologically, residues 2 to 17 are extracellular; the sequence is GQFITLMQSIPEALNM. A helical transmembrane segment spans residues 18 to 32; it reads AFNVALVIVSLLCVT. Lysine 33 is a topological domain (cytoplasmic). The helical transmembrane segment at 34–53 threads the bilayer; it reads GLINLWKCGIIQLLMFLALA. 2 consecutive stretches face the extracellular side: residues 54–58 and 59–448; these read GRSCD and GEYK…ALAD. Cysteine 57 lines the Zn(2+) pocket. Residues asparagine 75, asparagine 90, asparagine 101, asparagine 112, asparagine 117, asparagine 122, asparagine 133, asparagine 182, asparagine 218, and asparagine 243 are each glycosylated (N-linked (GlcNAc...) asparagine; by host). Disulfide bonds link cysteine 87–cysteine 250, cysteine 295–cysteine 308, cysteine 317–cysteine 326, and cysteine 380–cysteine 401. Asparagine 381, asparagine 389, asparagine 406, and asparagine 411 each carry an N-linked (GlcNAc...) asparagine; by host glycan. The chain crosses the membrane as a helical span at residues 449–469; sequence LCFWSLVFFTTTVFFQLIGIP. Topologically, residues 470–510 are cytoplasmic; it reads THRHLIGEGCPKPHRLTSNSLCSCGFYKIPKKPFRWVRKGK. Zn(2+)-binding residues include histidine 471, histidine 473, cysteine 479, histidine 483, cysteine 491, and cysteine 493.

This sequence belongs to the arenaviridae GPC protein family. Homotetramer; disulfide-linked. In terms of assembly, homotetramer. GP2 homotetramers bind through ionic interactions with GP1 homotetramers to form the GP complex together with the stable signal peptide. The GP-C polyprotein interacts with the host protease MBTPS1/SKI-1 resulting in the polyprotein processing. In terms of processing, specific enzymatic cleavages in vivo yield mature proteins. GP-C polyprotein is cleaved in the endoplasmic reticulum by the host protease MBTPS1. Only cleaved glycoprotein is incorporated into virions. The SSP remains stably associated with the GP complex following cleavage by signal peptidase and plays crucial roles in the trafficking of GP through the secretory pathway. Post-translationally, myristoylation is necessary for GP2-mediated fusion activity.

Its subcellular location is the virion membrane. It localises to the host endoplasmic reticulum membrane. It is found in the host Golgi apparatus membrane. The protein localises to the host cell membrane. In terms of biological role, class I viral fusion protein that directs fusion of viral and host endosomal membranes, leading to delivery of the nucleocapsid into the cytoplasm. Membrane fusion is mediated by irreversible conformational changes induced upon acidification in the endosome. Stable signal peptide (SSP): cleaved and functions as a signal peptide. In addition, it is also retained as the third component of the GP complex. The SSP is required for efficient glycoprotein expression, post-translational maturation cleavage of GP1 and GP2, glycoprotein transport to the cell surface plasma membrane, formation of infectious virus particles, and acid pH-dependent glycoprotein-mediated cell fusion. Functionally, interacts with the host receptor. The polypeptide is Pre-glycoprotein polyprotein GP complex (Pirital mammarenavirus (isolate Rat/Venezuela/VAV-488/1995) (PIRV)).